Reading from the N-terminus, the 88-residue chain is Small ribosomal subunit protein uS19 (88 aa).

The protein belongs to the universal ribosomal protein uS19 family.

Protein S19 forms a complex with S13 that binds strongly to the 16S ribosomal RNA. The protein is Small ribosomal subunit protein uS19 of Chlamydia abortus (strain DSM 27085 / S26/3) (Chlamydophila abortus).